A 78-amino-acid polypeptide reads, in one-letter code: Conotoxin TsMSGL-11 (78 aa).

The first 24 residues, 1–24 (MSGLGIMVLTLLLLVFMATSHQDA), serve as a signal peptide directing secretion. The propeptide occupies 25–44 (GEKQATQRDAINVRRRRSIT). 3 disulfides stabilise this stretch: Cys-51/Cys-63, Cys-55/Cys-72, and Cys-62/Cys-76. At Phe-77 the chain carries Phenylalanine amide.

It belongs to the conotoxin O3 superfamily. In terms of tissue distribution, expressed by the venom duct.

The protein resides in the secreted. The chain is Conotoxin TsMSGL-11 from Conus tessulatus (Tessellate cone).